Consider the following 291-residue polypeptide: POU class 2 homeobox associating-factor 2 (291 aa).

In terms of domain architecture, OCA spans 7 to 29 (KRVYQGVRVKHTVKDLLAEKRLR). The segment at 176–219 (AAPVADSPSLAGPDSGSSSPYRLTSGRSGSSIPSSSQPYTLQPL) is disordered. Positions 200–211 (SGRSGSSIPSSS) are enriched in low complexity.

The protein belongs to the POU2AF family.

In terms of biological role, transcriptional coactivator that may regulate cell type-specific differentiation pathways. The protein is POU class 2 homeobox associating-factor 2 (pou2af2) of Danio rerio (Zebrafish).